Here is an 82-residue protein sequence, read N- to C-terminus: Small ribosomal subunit protein bS16c (82 aa).

This sequence belongs to the bacterial ribosomal protein bS16 family.

The protein resides in the plastid. It is found in the chloroplast. This chain is Small ribosomal subunit protein bS16c, found in Pyropia yezoensis (Susabi-nori).